The following is a 112-amino-acid chain: Prothymosin alpha (112 aa).

The residue at position 1 (Met1) is an N-acetylmethionine. A disordered region spans residues 1–112; the sequence is MSDAAVDTSS…KKQKKTDEDD (112 aa). Ser2 bears the N-acetylserine; in Prothymosin alpha, N-terminally processed mark. At Ser2 the chain carries Phosphoserine. Thr8 carries the phosphothreonine modification. 2 positions are modified to phosphoserine: Ser9 and Ser10. Phosphothreonine occurs at positions 13 and 14. Positions 13 to 31 are enriched in basic and acidic residues; that stretch reads TTKDLKEKKEVVEEAENGR. An N6-acetyllysine; alternate modification is found at Lys15. Position 15 is an N6-succinyllysine; alternate (Lys15). A compositionally biased stretch (acidic residues) spans 43–84; the sequence is ENGEQEADNEVDEEEEEGGEEEEEEEEGDGEEEDGDEDEEAE. Residues 101 to 112 show a composition bias toward basic and acidic residues; that stretch reads ETKKQKKTDEDD. Residue Thr102 is modified to Phosphothreonine. Lys103 is subject to N6-acetyllysine; alternate. Lys103 participates in a covalent cross-link: Glycyl lysine isopeptide (Lys-Gly) (interchain with G-Cter in SUMO2); alternate. A Phosphothreonine modification is found at Thr108.

This sequence belongs to the pro/parathymosin family. In terms of assembly, interacts with NUPR1; regulates apoptotic process. Covalently linked to a small RNA of about 20 nucleotides.

It localises to the nucleus. Prothymosin alpha may mediate immune function by conferring resistance to certain opportunistic infections. The chain is Prothymosin alpha (Ptma) from Rattus norvegicus (Rat).